Consider the following 755-residue polypeptide: MKVLIVESEFLHQDTWVGNAVERLADALSQQNVTVIKSTSFDDGFAILSSNEAIDCLMFSYQMEHPDEHQNVRQLIGKLHERQQNVPVFLLGDREKALAAMDRDLLELVDEFAWILEDTADFIAGRAVAAMTRYRQQLLPPLFSALMKYSDIHEYSWAAPGHQGGVGFTKTPAGRFYHDYYGENLFRTDMGIERTSLGSLLDHTGAFGESEKYAARVFGADRSWSVVVGTSGSNRTIMQACMTDNDVVVVDRNCHKSIEQGLMLTGAKPVYMVPSRNRYGIIGPIYPQEMQPETLQKKISESPLTKDKAGQKPSYCVVTNCTYDGVCYNAKEAQDLLEKTSDRLHFDEAWYGYARFNPIYADHYAMRGEPGDHNGPTVFATHSTHKLLNALSQASYIHVREGRGAINFSRFNQAYMMHATTSPLYAICASNDVAVSMMDGNSGLSLTQEVIDEAVDFRQAMARLYKEFTADGSWFFKPWNKEVVTDPQTGKTYDFADAPTKLLTTVQDCWVMHPGESWHGFKDIPDNWSMLDPIKVSILAPGMGEDGELEETGVPAALVTAWLGRHGIVPTRTTDFQIMFLFSMGVTRGKWGTLVNTLCSFKRHYDANTPLAQVMPELVEQYPDTYANMGIHDLGDTMFAWLKENNPGARLNEAYSGLPVAEVTPREAYNAIVDNNVELVSIENLPGRIAANSVIPYPPGIPMLLSGENFGDKNSPQVSYLRSLQSWDHHFPGFEHETEGTEIIDGIYHVMCVKA.

Position 386 is an N6-(pyridoxal phosphate)lysine (lysine 386).

It belongs to the Orn/Lys/Arg decarboxylase class-I family. Homodecamer. The basic unit is a homodimer, organized into a ring of giving a pentamer of five homodimers. Requires pyridoxal 5'-phosphate as cofactor.

The protein localises to the cytoplasm. It carries out the reaction L-arginine + H(+) = agmatine + CO2. Its activity is regulated as follows. Homodimers are probably inactive, their assembly into a homodecamer at low pH requires neutralization of negatively charged residues. This uses cytoplasmic protons, contributing pH regulation and stabilizes the homodecamer. Its function is as follows. Component of the acid-resistance (AR) system allowing enteric pathogens to survive the acidic environment in the stomach. ADC can be found in two forms: biodegradative (this enzyme) and biosynthetic (speA). The biodegradative form plays a role in regulating pH by consuming proteins. Converts arginine imported by AdiC to agmatine which is then exported by AdiC. This is Biodegradative arginine decarboxylase (adiA) from Escherichia coli (strain K12).